The following is an 84-amino-acid chain: U4-theraphotoxin-Hhn1b (84 aa).

The signal sequence occupies residues 1-22 (MKVTLIAILTCAAVLVLHTTAA). A propeptide spanning residues 23–47 (EELEESQLMEVGMPDTELAAVDEER) is cleaved from the precursor. 3 disulfides stabilise this stretch: cysteine 51/cysteine 65, cysteine 55/cysteine 76, and cysteine 70/cysteine 81.

It belongs to the neurotoxin 12 (Hwtx-2) family. 02 (Hwtx-2) subfamily. As to expression, expressed by the venom gland.

The protein resides in the secreted. Postsynaptic neurotoxin. The chain is U4-theraphotoxin-Hhn1b from Cyriopagopus hainanus (Chinese bird spider).